Reading from the N-terminus, the 500-residue chain is Probable cytosol aminopeptidase (500 aa).

Mn(2+) contacts are provided by lysine 268 and aspartate 273. Lysine 280 is an active-site residue. 3 residues coordinate Mn(2+): aspartate 291, aspartate 350, and glutamate 352. Residue arginine 354 is part of the active site.

The protein belongs to the peptidase M17 family. It depends on Mn(2+) as a cofactor.

Its subcellular location is the cytoplasm. The catalysed reaction is Release of an N-terminal amino acid, Xaa-|-Yaa-, in which Xaa is preferably Leu, but may be other amino acids including Pro although not Arg or Lys, and Yaa may be Pro. Amino acid amides and methyl esters are also readily hydrolyzed, but rates on arylamides are exceedingly low.. It catalyses the reaction Release of an N-terminal amino acid, preferentially leucine, but not glutamic or aspartic acids.. In terms of biological role, presumably involved in the processing and regular turnover of intracellular proteins. Catalyzes the removal of unsubstituted N-terminal amino acids from various peptides. In Alkaliphilus metalliredigens (strain QYMF), this protein is Probable cytosol aminopeptidase.